Reading from the N-terminus, the 164-residue chain is Axial regulator YABBY 5 (164 aa).

Residues 16–43 form a C4-type zinc finger; the sequence is CNFCNIILAVNVPCSSLFDIVTVRCGHC.

It belongs to the YABBY family. In terms of assembly, binds to LUG and LUH; these complexes promote adaxial cell identity in leaves as well as embryonic shoot apical meristem (SAM) initiation and postembryonic SAM maintenance. Interacts with SPL/NZZ and SPEAR2.

The protein resides in the nucleus. Its function is as follows. Promotes adaxial cell identity. Regulates the initiation of embryonic shoot apical meristem (SAM) development. The sequence is that of Axial regulator YABBY 5 (YAB5) from Arabidopsis thaliana (Mouse-ear cress).